The primary structure comprises 140 residues: MSVSTSSKNTLLSSIISGILSLVIFATLRFCADWFNGSQLNVLVGGYLFSWLFILSLTCVSNAEMLIFGPDFQAKLVPEILFCLSLTVAAAGIVHRVCATTSVLFSLVGLYFLNRISIKYYSTSVVPVDAPARKTAKKFK.

4 helical membrane passes run 11–31, 40–60, 74–94, and 98–118; these read LLSS…LRFC, LNVL…LTCV, AKLV…AGIV, and CATT…RISI.

Belongs to the KRTCAP2 family. In terms of assembly, component of the oligosaccharyltransferase (OST) complex.

The protein resides in the membrane. Its function is as follows. Subunit of the oligosaccharyl transferase (OST) complex that catalyzes the initial transfer of a defined glycan (Glc(3)Man(9)GlcNAc(2) in eukaryotes) from the lipid carrier dolichol-pyrophosphate to an asparagine residue within an Asn-X-Ser/Thr consensus motif in nascent polypeptide chains, the first step in protein N-glycosylation. N-glycosylation occurs cotranslationally and the complex associates with the Sec61 complex at the channel-forming translocon complex that mediates protein translocation across the endoplasmic reticulum (ER). All subunits are required for a maximal enzyme activity. This is Protein KRTCAP2 homolog from Drosophila pseudoobscura pseudoobscura (Fruit fly).